A 424-amino-acid polypeptide reads, in one-letter code: Serine hydroxymethyltransferase 2 (424 aa).

(6S)-5,6,7,8-tetrahydrofolate contacts are provided by residues Leu-125 and 129 to 131 (GHL). Lys-234 is subject to N6-(pyridoxal phosphate)lysine. Glu-250 is a binding site for (6S)-5,6,7,8-tetrahydrofolate.

The protein belongs to the SHMT family. Homodimer. Pyridoxal 5'-phosphate serves as cofactor.

Its subcellular location is the cytoplasm. The catalysed reaction is (6R)-5,10-methylene-5,6,7,8-tetrahydrofolate + glycine + H2O = (6S)-5,6,7,8-tetrahydrofolate + L-serine. The protein operates within one-carbon metabolism; tetrahydrofolate interconversion. Its pathway is amino-acid biosynthesis; glycine biosynthesis; glycine from L-serine: step 1/1. Catalyzes the reversible interconversion of serine and glycine with tetrahydrofolate (THF) serving as the one-carbon carrier. This reaction serves as the major source of one-carbon groups required for the biosynthesis of purines, thymidylate, methionine, and other important biomolecules. Also exhibits THF-independent aldolase activity toward beta-hydroxyamino acids, producing glycine and aldehydes, via a retro-aldol mechanism. The chain is Serine hydroxymethyltransferase 2 from Cupriavidus pinatubonensis (strain JMP 134 / LMG 1197) (Cupriavidus necator (strain JMP 134)).